A 147-amino-acid chain; its full sequence is Hemoglobin subunit beta (147 aa).

Valine 2 carries the post-translational modification N-acetylvaline. The Globin domain occupies 3 to 147 (NLTSDEKTAV…VANALAHKYH (145 aa)). Serine 45 is subject to Phosphoserine. The residue at position 60 (lysine 60) is an N6-acetyllysine. Position 64 (histidine 64) interacts with heme b. Lysine 83 carries the post-translational modification N6-acetyllysine. Position 93 (histidine 93) interacts with heme b. Cysteine 94 is subject to S-nitrosocysteine. Lysine 145 bears the N6-acetyllysine mark.

The protein belongs to the globin family. In terms of assembly, heterotetramer of two alpha chains and two beta chains. In terms of tissue distribution, red blood cells.

In terms of biological role, involved in oxygen transport from the lung to the various peripheral tissues. The chain is Hemoglobin subunit beta (HBB) from Dasypus novemcinctus (Nine-banded armadillo).